We begin with the raw amino-acid sequence, 352 residues long: Putative GATA transcription factor 22 (352 aa).

The interval 27-53 is disordered; that stretch reads SLHHHLQQQQQQQQHFHHQASSNPSSL. Over residues 33 to 53 the composition is skewed to low complexity; it reads QQQQQQQQHFHHQASSNPSSL. The Nuclear localization signal signature appears at 112-119; it reads PKKETRLK. Residues 163-189 are disordered; sequence AIITTSDSSKQHTNNDQSSNLSNSERQ. Polar residues predominate over residues 165 to 189; that stretch reads ITTSDSSKQHTNNDQSSNLSNSERQ. Residues 195–249 form a GATA-type zinc finger; that stretch reads DCVIRICSDCNTTKTPLWRSGPRGPKSLCNACGIRQRKARRAAMATATATAVSGV.

Belongs to the type IV zinc-finger family. Class B subfamily. Forms heterodimers with GATA18. As to expression, expressed predominantly in leaves, and barely in stems, flowers and siliques.

It localises to the nucleus. In terms of biological role, transcriptional regulator that specifically binds 5'-GATA-3' or 5'-GAT-3' motifs within gene promoters. Involved in the modulation of chloroplast development, growth and division in a cytokinin-dependent manner. Repressor of the gibberellic acid (GA) signaling pathway that regulates flowering and modulates greening, in a SOC1-dependent manner. Prevents the accumulation of SOC1 during flowering. Promotes chlorophyll biosynthesis throughout the plant, by regulating chlorophyll biosynthetic genes (e.g. HEMA1 and GUN4) and chloroplast localized glutamate synthase (e.g. GLU1). Involved in the regulation of sugar-sensing genes (e.g. HXK1, HXK2, STP13 and PLT6). Regulator of germination, senescence, elongation growth and flowering time. Influences also leaf starch content. The protein is Putative GATA transcription factor 22 of Arabidopsis thaliana (Mouse-ear cress).